Consider the following 324-residue polypeptide: Carbonic anhydrase 15 (324 aa).

The first 18 residues, 1–18 (MWALDFLLSFLLIQLAAQ), serve as a signal peptide directing secretion. The 271-residue stretch at 23 to 293 (GTWCYDSQDP…LGGRRISASP (271 aa)) folds into the Alpha-carbonic anhydrase domain. Residue H90 is the Proton acceptor of the active site. Residues H122, H124, and H147 each coordinate Zn(2+). Residue Y155 is part of the active site. N-linked (GlcNAc...) asparagine glycosylation is found at N184, N194, and N203. 231–232 (TT) contacts substrate. Residues 269-290 (LHPRPLTSNFRPQQPLGGRRIS) form a disordered region.

This sequence belongs to the alpha-carbonic anhydrase family. Zn(2+) is required as a cofactor.

The protein resides in the secreted. The catalysed reaction is hydrogencarbonate + H(+) = CO2 + H2O. Its activity is regulated as follows. Repressed by coumarins. Its function is as follows. Reversible hydration of carbon dioxide. The sequence is that of Carbonic anhydrase 15 (Ca15) from Mus musculus (Mouse).